A 475-amino-acid polypeptide reads, in one-letter code: Ribulose bisphosphate carboxylase large chain (475 aa).

A propeptide spanning residues 1-2 (MS) is cleaved from the precursor. Proline 3 carries the N-acetylproline modification. Lysine 14 is subject to N6,N6,N6-trimethyllysine. Substrate contacts are provided by asparagine 123 and threonine 173. The Proton acceptor role is filled by lysine 175. Substrate is bound at residue lysine 177. 3 residues coordinate Mg(2+): lysine 201, aspartate 203, and glutamate 204. Lysine 201 is modified (N6-carboxylysine). Catalysis depends on histidine 294, which acts as the Proton acceptor. 3 residues coordinate substrate: arginine 295, histidine 327, and serine 379.

Belongs to the RuBisCO large chain family. Type I subfamily. In terms of assembly, heterohexadecamer of 8 large chains and 8 small chains; disulfide-linked. The disulfide link is formed within the large subunit homodimers. Requires Mg(2+) as cofactor. Post-translationally, the disulfide bond which can form in the large chain dimeric partners within the hexadecamer appears to be associated with oxidative stress and protein turnover.

It is found in the plastid. The protein localises to the chloroplast. It carries out the reaction 2 (2R)-3-phosphoglycerate + 2 H(+) = D-ribulose 1,5-bisphosphate + CO2 + H2O. It catalyses the reaction D-ribulose 1,5-bisphosphate + O2 = 2-phosphoglycolate + (2R)-3-phosphoglycerate + 2 H(+). Its function is as follows. RuBisCO catalyzes two reactions: the carboxylation of D-ribulose 1,5-bisphosphate, the primary event in carbon dioxide fixation, as well as the oxidative fragmentation of the pentose substrate in the photorespiration process. Both reactions occur simultaneously and in competition at the same active site. The sequence is that of Ribulose bisphosphate carboxylase large chain from Platanus occidentalis (Sycamore).